The sequence spans 251 residues: Plant UBX domain-containing protein 1 (251 aa).

Methionine 1 is modified (N-acetylmethionine). A UBX domain is found at 104 to 180 (SKLTKAVIRV…GFVPGAIVYF (77 aa)). The segment at 212–251 (AVEPVESSSEPATVDSSAVPVEHERKSTEKKTTKPKWFKM) is disordered. Polar residues predominate over residues 217-227 (ESSSEPATVDS). Residues 232 to 243 (VEHERKSTEKKT) are compositionally biased toward basic and acidic residues.

In terms of assembly, interacts with CDC48A (non-hexameric) via its UBX-containing C-terminal domain.

The protein resides in the cytoplasm. Its function is as follows. Regulates CDC48A by inhibiting its ATPase activity and by promoting the disassembly of the active hexamer. The sequence is that of Plant UBX domain-containing protein 1 from Arabidopsis thaliana (Mouse-ear cress).